A 266-amino-acid polypeptide reads, in one-letter code: Type II iodothyronine deiodinase (266 aa).

At 1 to 9 the chain is on the lumenal side; that stretch reads MGLLSVDLL. The chain crosses the membrane as a helical; Signal-anchor for type III membrane protein span at residues 10 to 34; sequence ITLQILPVFFSNCLFLALYDSVILL. At 35 to 266 the chain is on the cytoplasmic side; the sequence is KHVALLLSRS…KNFSKRUILD (232 aa). Residue U130 is part of the active site. Residues U130 and U263 are each a non-standard amino acid (selenocysteine).

This sequence belongs to the iodothyronine deiodinase family. As to quaternary structure, predominantly monomer. Can form homodimers but homodimerization is not essential for enzyme activity. Interacts with USP20 and USP33. Interacts with MARCHF6. In terms of processing, ubiquitinated by MARCHF6, leading to its degradation by the proteasome. Deubiquitinated by USP20 and USP33. Expressed in mammary gland and in brain.

It localises to the endoplasmic reticulum membrane. It catalyses the reaction 3,3',5-triiodo-L-thyronine + iodide + A + H(+) = L-thyroxine + AH2. The catalysed reaction is 3,3'-diiodo-L-thyronine + iodide + A + H(+) = 3,3',5'-triiodo-L-thyronine + AH2. It carries out the reaction 3'-iodo-L-thyronine + iodide + A + H(+) = 3',5'-diiodo-L-thyronine + AH2. The enzyme catalyses 3,3'-diiodothyronamine + iodide + A + H(+) = 3,3',5'-triiodothyronamine + AH2. It catalyses the reaction 3'-iodothyronamine + iodide + A + H(+) = 3',5'-diiodothyronamine + AH2. Its function is as follows. Plays a crucial role in the metabolism of thyroid hormones (TH) and has specific roles in TH activation and inactivation by deiodination. Catalyzes the deiodination of L-thyroxine (T4) to 3,5,3'-triiodothyronine (T3) and 3,3',5'-triiodothyronine (rT3) to 3,3'-diiodothyronine (3,3'-T2) via outer-ring deiodination (ORD). Catalyzes the deiodination of 3',5'-diiodothyronine (3',5'-T2) to 3'-monoiodothyronine (3'-T1) via ORD. Catalyzes the phenolic ring deiodinations of 3,3',5'-triiodothyronamine and 3',5'- diiodothyronamine. This is Type II iodothyronine deiodinase (Dio2) from Mus musculus (Mouse).